A 173-amino-acid polypeptide reads, in one-letter code: Thaumatin-like protein PWIR2 (173 aa).

The N-terminal stretch at 1 to 20 (MATSPVLFLLLAVFAAGASA) is a signal peptide.

This sequence belongs to the thaumatin family.

This chain is Thaumatin-like protein PWIR2, found in Triticum aestivum (Wheat).